Consider the following 86-residue polypeptide: Anti-adapter protein IraP (86 aa).

Residues 1–36 (MKNLIAELLLKLAQKEEESKELCAQVEALEIIVTAM) adopt a coiled-coil conformation.

The protein belongs to the IraP family. As to quaternary structure, interacts with RssB.

It localises to the cytoplasm. Inhibits RpoS proteolysis by regulating RssB activity, thereby increasing the stability of the sigma stress factor RpoS especially during phosphate starvation, but also in stationary phase and during nitrogen starvation. Its effect on RpoS stability is due to its interaction with RssB, which probably blocks the interaction of RssB with RpoS, and the consequent delivery of the RssB-RpoS complex to the ClpXP protein degradation pathway. This is Anti-adapter protein IraP from Shigella boydii serotype 4 (strain Sb227).